The primary structure comprises 1614 residues: Adenylate cyclase type 10 (1614 aa).

2 Guanylate cyclase domains span residues 42 to 179 and 293 to 418; these read VLMF…RLAQ and TIVF…ARMM. Mg(2+)-binding residues include Asp-47 and Ile-48. 47-52 provides a ligand contact to ATP; sequence DISGFT. Lys-95 provides a ligand contact to hydrogencarbonate. Residue Asp-99 participates in Mg(2+) binding. The ATP site is built by Asp-99 and Lys-144. Positions 167, 176, and 337 each coordinate hydrogencarbonate. ATP contacts are provided by residues Val-406 and 412–416; that span reads NIAAR.

It belongs to the adenylyl cyclase class-4/guanylyl cyclase family. Mg(2+) serves as cofactor. Requires Mn(2+) as cofactor. In terms of tissue distribution, expressed in testis.

The protein resides in the cell membrane. Its subcellular location is the cytoplasm. It is found in the cytoskeleton. It localises to the perinuclear region. The protein localises to the nucleus. The protein resides in the cell projection. Its subcellular location is the cilium. It is found in the mitochondrion. The enzyme catalyses ATP = 3',5'-cyclic AMP + diphosphate. Its activity is regulated as follows. Activated by manganese or magnesium ions. In the presence of magnesium ions, the enzyme is activated by bicarbonate. Calcium mildly increases the enzyme activity, also in the presence of magnesium ions. Catalyzes the formation of the signaling molecule cAMP. May function as sensor that mediates responses to changes in cellular bicarbonate and CO(2) levels. Has a critical role in mammalian spermatogenesis by producing the cAMP which regulates cAMP-responsive nuclear factors indispensable for sperm maturation in the epididymis. Induces capacitation, the maturational process that sperm undergo prior to fertilization. Involved in ciliary beat regulation. The polypeptide is Adenylate cyclase type 10 (Adcy10) (Mus musculus (Mouse)).